The chain runs to 433 residues: Urokinase-type plasminogen activator (433 aa).

The first 20 residues, 1–20 (MRVLLACLLVCALVVSDSDG), serve as a signal peptide directing secretion. The EGF-like domain maps to 29 to 65 (GESNCGCLNGGKCVTYKYFSNIQRCSCPKKFQGEHCE). Intrachain disulfides connect C33/C41, C35/C53, C55/C64, C72/C153, C93/C135, and C124/C148. The interval 36-59 (LNGGKCVTYKYFSNIQRCSCPKKF) is binds urokinase plasminogen activator surface receptor. In terms of domain architecture, Kringle spans 72-153 (CYQGNGHSYR…FVQFCMVQDC (82 aa)). A connecting peptide region spans residues 154–180 (SVGKSPSSPREKEEFQCGQKALRPRFK). S160 carries the phosphoserine modification. Disulfide bonds link C170–C301, C211–C227, C219–C290, C315–C384, C347–C363, and C374–C402. In terms of domain architecture, Peptidase S1 spans 181 to 426 (IVGGQVTNAE…FLPWINTHTR (246 aa)). Catalysis depends on charge relay system residues H226 and D277. S378 serves as the catalytic Charge relay system.

Belongs to the peptidase S1 family. As to quaternary structure, found in high and low molecular mass forms. Each consists of two chains, A and B. The high molecular mass form contains a long chain A which is cleaved to yield a short chain A. Forms heterodimer with SERPINA5. Binds LRP1B; binding is followed by internalization and degradation. Interacts with MRC2. Interacts with PLAUR. In complex with SERPINE1, interacts with PLAUR/uPAR. Interacts with SORL1 and LRP1, either alone or in complex with SERPINE1; these interactions are abolished in the presence of LRPAP1/RAP. The ternary complex composed of PLAUR-PLAU-PAI1 also interacts with SORLA. Produced as an inactive single-chain protein (pro-uPA or sc-uPA), is processed into the active disulfide-linked two-chain form of PLAU/uPA by a proteolytic event mediated, at least, by TMPRSS4.

It localises to the secreted. The catalysed reaction is Specific cleavage of Arg-|-Val bond in plasminogen to form plasmin.. With respect to regulation, inhibited by SERPINA5. Inhibited by SERPINE1. Specifically cleaves the zymogen plasminogen to form the active enzyme plasmin. The polypeptide is Urokinase-type plasminogen activator (PLAU) (Bos taurus (Bovine)).